The primary structure comprises 889 residues: Translation initiation factor IF-2 (889 aa).

The disordered stretch occupies residues M1 to E299. Residues I61–R76 are compositionally biased toward low complexity. Residues P77–H93 are compositionally biased toward pro residues. The span at M116 to E182 shows a compositional bias: basic and acidic residues. Residues R196–A215 are compositionally biased toward low complexity. Residues R220 to R231 show a composition bias toward basic and acidic residues. Residues S387–D554 form the tr-type G domain. The tract at residues G396–T403 is G1. A GTP-binding site is contributed by G396–T403. A G2 region spans residues G421–H425. The tract at residues D442–G445 is G3. Residues D442–H446 and N496–D499 each bind GTP. The interval N496–D499 is G4. The segment at S532 to K534 is G5.

This sequence belongs to the TRAFAC class translation factor GTPase superfamily. Classic translation factor GTPase family. IF-2 subfamily.

It is found in the cytoplasm. Functionally, one of the essential components for the initiation of protein synthesis. Protects formylmethionyl-tRNA from spontaneous hydrolysis and promotes its binding to the 30S ribosomal subunits. Also involved in the hydrolysis of GTP during the formation of the 70S ribosomal complex. The protein is Translation initiation factor IF-2 of Rhizobium meliloti (strain 1021) (Ensifer meliloti).